We begin with the raw amino-acid sequence, 373 residues long: Dual-specificity RNA methyltransferase RlmN (373 aa).

The active-site Proton acceptor is the E94. A Radical SAM core domain is found at 100–339 (EDDRATLCVS…VIVRKTRGDD (240 aa)). A disulfide bridge links C107 with C344. [4Fe-4S] cluster contacts are provided by C114, C118, and C121. S-adenosyl-L-methionine is bound by residues 168–169 (GE), S200, 222–224 (SIH), and N301. C344 acts as the S-methylcysteine intermediate in catalysis.

This sequence belongs to the radical SAM superfamily. RlmN family. [4Fe-4S] cluster serves as cofactor.

The protein localises to the cytoplasm. It catalyses the reaction adenosine(2503) in 23S rRNA + 2 reduced [2Fe-2S]-[ferredoxin] + 2 S-adenosyl-L-methionine = 2-methyladenosine(2503) in 23S rRNA + 5'-deoxyadenosine + L-methionine + 2 oxidized [2Fe-2S]-[ferredoxin] + S-adenosyl-L-homocysteine. The catalysed reaction is adenosine(37) in tRNA + 2 reduced [2Fe-2S]-[ferredoxin] + 2 S-adenosyl-L-methionine = 2-methyladenosine(37) in tRNA + 5'-deoxyadenosine + L-methionine + 2 oxidized [2Fe-2S]-[ferredoxin] + S-adenosyl-L-homocysteine. In terms of biological role, specifically methylates position 2 of adenine 2503 in 23S rRNA and position 2 of adenine 37 in tRNAs. m2A2503 modification seems to play a crucial role in the proofreading step occurring at the peptidyl transferase center and thus would serve to optimize ribosomal fidelity. The protein is Dual-specificity RNA methyltransferase RlmN of Shewanella sp. (strain MR-4).